The following is a 117-amino-acid chain: MQTIEIGNKAELQACKFLHTQALEILAHNFKALPYGEIDIIALDKDTLVFIEVKYRSKTKFAQAEEMLTYSKQQKLVNSASIYLQHNPQYQDYQCRFDLIAINESNINWIKNAFGVI.

It belongs to the UPF0102 family.

The protein is UPF0102 protein FTW_1281 of Francisella tularensis subsp. tularensis (strain WY96-3418).